Reading from the N-terminus, the 209-residue chain is Large ribosomal subunit protein uL3 (209 aa).

Positions 126–148 are disordered; the sequence is HGQSRGPMAHGSRYHRRPGSMGP.

This sequence belongs to the universal ribosomal protein uL3 family. Part of the 50S ribosomal subunit. Forms a cluster with proteins L14 and L19.

In terms of biological role, one of the primary rRNA binding proteins, it binds directly near the 3'-end of the 23S rRNA, where it nucleates assembly of the 50S subunit. The chain is Large ribosomal subunit protein uL3 from Listeria monocytogenes serotype 4b (strain CLIP80459).